The primary structure comprises 85 residues: U4-theraphotoxin-Hhn1ab (85 aa).

Residues 1–22 (MKVTLIAILTCAAVLVLHTTAA) form the signal peptide. A propeptide spanning residues 23 to 48 (EELEAESQLMEVGMPDTELAAVDEER) is cleaved from the precursor. Intrachain disulfides connect Cys-56/Cys-77 and Cys-71/Cys-82.

This sequence belongs to the neurotoxin 12 (Hwtx-2) family. 02 (Hwtx-2) subfamily. As to expression, expressed by the venom gland.

It localises to the secreted. In terms of biological role, postsynaptic neurotoxin. The chain is U4-theraphotoxin-Hhn1ab from Cyriopagopus hainanus (Chinese bird spider).